The sequence spans 391 residues: Succinate--CoA ligase [ADP-forming] subunit beta (391 aa).

The 240-residue stretch at 9–248 (KDILRKFGVS…TGEEDPFEVE (240 aa)) folds into the ATP-grasp domain. ATP contacts are provided by residues Lys-50, 57-59 (GRG), Glu-103, Met-106, and Glu-111. The Mg(2+) site is built by Asn-203 and Asp-217. Residues Asn-268 and 325–327 (GIV) contribute to the substrate site.

Belongs to the succinate/malate CoA ligase beta subunit family. In terms of assembly, heterotetramer of two alpha and two beta subunits. It depends on Mg(2+) as a cofactor.

The enzyme catalyses succinate + ATP + CoA = succinyl-CoA + ADP + phosphate. It carries out the reaction GTP + succinate + CoA = succinyl-CoA + GDP + phosphate. Its pathway is carbohydrate metabolism; tricarboxylic acid cycle; succinate from succinyl-CoA (ligase route): step 1/1. Functionally, succinyl-CoA synthetase functions in the citric acid cycle (TCA), coupling the hydrolysis of succinyl-CoA to the synthesis of either ATP or GTP and thus represents the only step of substrate-level phosphorylation in the TCA. The beta subunit provides nucleotide specificity of the enzyme and binds the substrate succinate, while the binding sites for coenzyme A and phosphate are found in the alpha subunit. The polypeptide is Succinate--CoA ligase [ADP-forming] subunit beta (Chlorobium phaeobacteroides (strain BS1)).